The sequence spans 337 residues: Glyceraldehyde-3-phosphate dehydrogenase 2 (337 aa).

NADP(+)-binding positions include 11–12, aspartate 35, arginine 80, and threonine 122; that span reads RI. Residues 153–155, threonine 184, arginine 199, 212–213, and arginine 235 each bind D-glyceraldehyde 3-phosphate; these read SCT and TG. The active-site Nucleophile is cysteine 154. Position 317 (asparagine 317) interacts with NADP(+).

It belongs to the glyceraldehyde-3-phosphate dehydrogenase family. As to quaternary structure, homotetramer.

The protein localises to the cytoplasm. It catalyses the reaction D-glyceraldehyde 3-phosphate + phosphate + NADP(+) = (2R)-3-phospho-glyceroyl phosphate + NADPH + H(+). The enzyme catalyses D-glyceraldehyde 3-phosphate + phosphate + NAD(+) = (2R)-3-phospho-glyceroyl phosphate + NADH + H(+). It participates in carbohydrate biosynthesis; Calvin cycle. Gap2 has a major role in carbon fixation as a component of the Calvin cycle. Catalyzes the oxidative phosphorylation of glyceraldehyde 3-phosphate (G3P) to 1,3-bisphosphoglycerate (BPG) using the cofactor NAD. The first reaction step involves the formation of a hemiacetal intermediate between G3P and a cysteine residue, and this hemiacetal intermediate is then oxidized to a thioester, with concomitant reduction of NAD to NADH. The reduced NADH is then exchanged with the second NAD, and the thioester is attacked by a nucleophilic inorganic phosphate to produce BPG. The protein is Glyceraldehyde-3-phosphate dehydrogenase 2 (gap2) of Trichormus variabilis (strain ATCC 29413 / PCC 7937) (Anabaena variabilis).